Here is a 126-residue protein sequence, read N- to C-terminus: Fatty acid-binding protein 10-A, liver basic (126 aa).

4 residues coordinate cholate: K57, K77, H99, and Q101.

The protein belongs to the calycin superfamily. Fatty-acid binding protein (FABP) family. As to expression, expressed in the developing embryonic liver from 48 hpf. Also expressed in the liver of 5-day-old larvae. In adults, primarily expressed in the liver, with weak expression in the testis and intestine.

The protein localises to the cytoplasm. In terms of biological role, binds hydrophobic ligands, such as cholate, in the cytoplasm. May be involved in intracellular lipid transport. Binds one cholate per subunit. In Danio rerio (Zebrafish), this protein is Fatty acid-binding protein 10-A, liver basic (fabp10a).